The chain runs to 118 residues: Large ribosomal subunit protein bL19 (118 aa).

This sequence belongs to the bacterial ribosomal protein bL19 family.

Functionally, this protein is located at the 30S-50S ribosomal subunit interface and may play a role in the structure and function of the aminoacyl-tRNA binding site. This is Large ribosomal subunit protein bL19 from Beutenbergia cavernae (strain ATCC BAA-8 / DSM 12333 / CCUG 43141 / JCM 11478 / NBRC 16432 / NCIMB 13614 / HKI 0122).